Consider the following 225-residue polypeptide: Ribosomal RNA large subunit methyltransferase E (225 aa).

Positions 76, 78, 99, 115, and 139 each coordinate S-adenosyl-L-methionine. Residue Lys-179 is the Proton acceptor of the active site.

This sequence belongs to the class I-like SAM-binding methyltransferase superfamily. RNA methyltransferase RlmE family.

The protein localises to the cytoplasm. The catalysed reaction is uridine(2552) in 23S rRNA + S-adenosyl-L-methionine = 2'-O-methyluridine(2552) in 23S rRNA + S-adenosyl-L-homocysteine + H(+). Specifically methylates the uridine in position 2552 of 23S rRNA at the 2'-O position of the ribose in the fully assembled 50S ribosomal subunit. The chain is Ribosomal RNA large subunit methyltransferase E from Afipia carboxidovorans (strain ATCC 49405 / DSM 1227 / KCTC 32145 / OM5) (Oligotropha carboxidovorans).